The primary structure comprises 599 residues: Sulfite reductase [NADPH] flavoprotein alpha-component (599 aa).

The region spanning 64–202 (ITLISASQTG…VAAQWRARIV (139 aa)) is the Flavodoxin-like domain. Residues 70 to 75 (SQTGNA), 117 to 120 (STQG), and 153 to 162 (LGDTSYEFFC) contribute to the FMN site. An FAD-binding FR-type domain is found at 234–448 (EAPLRASLSV…IEHNDNFRLP (215 aa)). FAD is bound by residues Thr-322, Ala-356, 386 to 389 (RLYS), 404 to 406 (TVG), Tyr-410, and 419 to 422 (GGAS). Residues 519 to 520 (SR), 525 to 529 (KIYVQ), and Asp-561 contribute to the NADP(+) site. Tyr-599 provides a ligand contact to FAD.

Belongs to the NADPH-dependent sulphite reductase flavoprotein subunit CysJ family. It in the N-terminal section; belongs to the flavodoxin family. The protein in the C-terminal section; belongs to the flavoprotein pyridine nucleotide cytochrome reductase family. In terms of assembly, alpha(8)-beta(8). The alpha component is a flavoprotein, the beta component is a hemoprotein. Requires FAD as cofactor. It depends on FMN as a cofactor.

It carries out the reaction hydrogen sulfide + 3 NADP(+) + 3 H2O = sulfite + 3 NADPH + 4 H(+). Its pathway is sulfur metabolism; hydrogen sulfide biosynthesis; hydrogen sulfide from sulfite (NADPH route): step 1/1. Component of the sulfite reductase complex that catalyzes the 6-electron reduction of sulfite to sulfide. This is one of several activities required for the biosynthesis of L-cysteine from sulfate. The flavoprotein component catalyzes the electron flow from NADPH -&gt; FAD -&gt; FMN to the hemoprotein component. This Salmonella arizonae (strain ATCC BAA-731 / CDC346-86 / RSK2980) protein is Sulfite reductase [NADPH] flavoprotein alpha-component.